Here is a 144-residue protein sequence, read N- to C-terminus: Large ribosomal subunit protein uL15 (144 aa).

The tract at residues 1–55 (MQLNELKPVAGSRFKRLRKGRGLSSGHGFTSGRGTKGQKAHGKTRLGFEGGQMPL) is disordered. Residues 23-35 (LSSGHGFTSGRGT) show a composition bias toward gly residues.

It belongs to the universal ribosomal protein uL15 family. In terms of assembly, part of the 50S ribosomal subunit.

In terms of biological role, binds to the 23S rRNA. The protein is Large ribosomal subunit protein uL15 of Limosilactobacillus fermentum (strain NBRC 3956 / LMG 18251) (Lactobacillus fermentum).